Consider the following 134-residue polypeptide: Large ribosomal subunit protein uL22 (134 aa).

This sequence belongs to the universal ribosomal protein uL22 family. In terms of assembly, part of the 50S ribosomal subunit. Contacts protein L32.

Functionally, this protein binds specifically to 23S rRNA; its binding is stimulated by other ribosomal proteins, e.g. L4, L17, and L20. It is important during the early stages of 50S assembly. It makes multiple contacts with different domains of the 23S rRNA in the assembled 50S subunit and ribosome. The globular domain of the protein is located by the polypeptide exit tunnel on the outside of the subunit while an extended beta-hairpin forms part of the wall of the tunnel. Forms a pair of 'tweezers' with L32 that hold together two different domains of the 23S rRNA. Interacts with the tunnel-blocking modified macrolide azithromycin. Upon binding of the macrolide troleadomycin to the ribosome, the tip of the beta-hairpin is displaced, which severely restricts the tunnel. This and experiments in E.coli have led to the suggestion that it is part of the gating mechanism involved in translation arrest in the absence of the protein export system. The protein is Large ribosomal subunit protein uL22 (rplV) of Deinococcus radiodurans (strain ATCC 13939 / DSM 20539 / JCM 16871 / CCUG 27074 / LMG 4051 / NBRC 15346 / NCIMB 9279 / VKM B-1422 / R1).